The chain runs to 247 residues: 3-deoxy-manno-octulosonate cytidylyltransferase (247 aa).

The protein belongs to the KdsB family.

The protein resides in the cytoplasm. The catalysed reaction is 3-deoxy-alpha-D-manno-oct-2-ulosonate + CTP = CMP-3-deoxy-beta-D-manno-octulosonate + diphosphate. Its pathway is nucleotide-sugar biosynthesis; CMP-3-deoxy-D-manno-octulosonate biosynthesis; CMP-3-deoxy-D-manno-octulosonate from 3-deoxy-D-manno-octulosonate and CTP: step 1/1. The protein operates within bacterial outer membrane biogenesis; lipopolysaccharide biosynthesis. Its function is as follows. Activates KDO (a required 8-carbon sugar) for incorporation into bacterial lipopolysaccharide in Gram-negative bacteria. The sequence is that of 3-deoxy-manno-octulosonate cytidylyltransferase from Chlorobium limicola (strain DSM 245 / NBRC 103803 / 6330).